Here is a 470-residue protein sequence, read N- to C-terminus: Cysteine--tRNA ligase (470 aa).

Position 27 (Cys-27) interacts with Zn(2+). The short motif at 29-39 is the 'HIGH' region element; it reads PTVYNHIHIGN. The Zn(2+) site is built by Cys-207, His-232, and Glu-236. The 'KMSKS' region motif lies at 265–269; sequence KMAKS. Lys-268 lines the ATP pocket.

This sequence belongs to the class-I aminoacyl-tRNA synthetase family. As to quaternary structure, monomer. The cofactor is Zn(2+).

The protein localises to the cytoplasm. The catalysed reaction is tRNA(Cys) + L-cysteine + ATP = L-cysteinyl-tRNA(Cys) + AMP + diphosphate. This Rubrobacter xylanophilus (strain DSM 9941 / JCM 11954 / NBRC 16129 / PRD-1) protein is Cysteine--tRNA ligase.